Reading from the N-terminus, the 537-residue chain is Hexosyltransferase GAUT11 (537 aa).

Over 1-16 (MRRWPVDHRRRGRRRL) the chain is Cytoplasmic. A helical; Signal-anchor for type II membrane protein membrane pass occupies residues 17–37 (SSWIWFLLGSFSVAGLVLFIV). Residues 38–537 (QHYHHQQDPS…HPYLQDCVTA (500 aa)) are Lumenal-facing. Residues asparagine 66, asparagine 247, asparagine 299, asparagine 403, asparagine 436, and asparagine 525 are each glycosylated (N-linked (GlcNAc...) asparagine).

It belongs to the glycosyltransferase 8 family. Monomer. Expressed in roots, inflorescences, siliques, seeds, leaves and stems.

Its subcellular location is the golgi apparatus membrane. It carries out the reaction [(1-&gt;4)-alpha-D-galacturonosyl](n) + UDP-alpha-D-galacturonate = [(1-&gt;4)-alpha-D-galacturonosyl](n+1) + UDP + H(+). It participates in glycan metabolism; pectin biosynthesis. Glycosyltransferase involved in pectin and/or xylans biosynthesis in cell walls. Required for the biosynthesis of pectin in seed coat epidermal (SCE) cells. Collaboratively with MUCI70, essential for the accumulation of seed mucilage, a gelatinous wall rich in unbranched rhamnogalacturonan I (RG I), and for shaping the surface morphology of seeds. Catalyzes homogalacturonan (HG) elongation by acting as an HG alpha-1,4 galacturonic acid transferase. This Arabidopsis thaliana (Mouse-ear cress) protein is Hexosyltransferase GAUT11.